We begin with the raw amino-acid sequence, 99 residues long: PE-PGRS family protein PE25 (99 aa).

The PE domain maps to 1–92 (MSFVITNPEA…GADKYATAEA (92 aa)). Residue Ser2 is modified to N-acetylserine.

This sequence belongs to the mycobacterial PE family. Forms a heterodimer with PPE41. The dimer forms a 1:1:1 heterotrimeric complex with EspG5. Interacts with PPE51.

The protein resides in the secreted. Its function is as follows. The PE25/PPE41 dimer induces both a strong humoral and cellular immune response. PE25 protein alone induces low response. The dimer induces necrosis, but not apoptosis, in mouse macrophage cells. It also induces activation and maturation of mouse dendritic cells and drives Th2-biased immune responses. The polypeptide is PE-PGRS family protein PE25 (Mycobacterium tuberculosis (strain ATCC 25618 / H37Rv)).